Reading from the N-terminus, the 174-residue chain is Adenine phosphoribosyltransferase (174 aa).

This sequence belongs to the purine/pyrimidine phosphoribosyltransferase family. As to quaternary structure, homodimer.

The protein localises to the cytoplasm. The enzyme catalyses AMP + diphosphate = 5-phospho-alpha-D-ribose 1-diphosphate + adenine. It functions in the pathway purine metabolism; AMP biosynthesis via salvage pathway; AMP from adenine: step 1/1. Catalyzes a salvage reaction resulting in the formation of AMP, that is energically less costly than de novo synthesis. The sequence is that of Adenine phosphoribosyltransferase from Phocaeicola vulgatus (strain ATCC 8482 / DSM 1447 / JCM 5826 / CCUG 4940 / NBRC 14291 / NCTC 11154) (Bacteroides vulgatus).